A 111-amino-acid polypeptide reads, in one-letter code: Ig kappa chain V-III region PC 3741/TEPC 111 (111 aa).

Positions 1-23 are framework-1; the sequence is DIVLTQSPASLAVSLGQRATISC. Cys23 and Cys92 form a disulfide bridge. The complementarity-determining-1 stretch occupies residues 24 to 38; the sequence is RASESVDSYGNSFMH. The interval 39 to 53 is framework-2; sequence WYQQKPGQPPKLLIY. The complementarity-determining-2 stretch occupies residues 54–60; the sequence is RASNLES. A framework-3 region spans residues 61–92; it reads GIPARFSGSGSRTDFTLTINPVEADDVATYYC. The tract at residues 93–101 is complementarity-determining-3; the sequence is QQSNEDPYT. The interval 102 to 111 is framework-4; that stretch reads FGGGTKLEIK.

In Mus musculus (Mouse), this protein is Ig kappa chain V-III region PC 3741/TEPC 111.